Here is an 849-residue protein sequence, read N- to C-terminus: Glycogen phosphorylase (849 aa).

N6-(pyridoxal phosphate)lysine is present on Lys-679.

This sequence belongs to the glycogen phosphorylase family. It depends on pyridoxal 5'-phosphate as a cofactor.

It catalyses the reaction [(1-&gt;4)-alpha-D-glucosyl](n) + phosphate = [(1-&gt;4)-alpha-D-glucosyl](n-1) + alpha-D-glucose 1-phosphate. Phosphorylase is an important allosteric enzyme in carbohydrate metabolism. Enzymes from different sources differ in their regulatory mechanisms and in their natural substrates. However, all known phosphorylases share catalytic and structural properties. The sequence is that of Glycogen phosphorylase (glgP) from Synechocystis sp. (strain ATCC 27184 / PCC 6803 / Kazusa).